A 163-amino-acid chain; its full sequence is MAKESSFDIVSKVELPEVQNAIQIALKEISTRYDFKGSKSDISLDKEELVLVSDDEFKLSQLKDVLVSKLIKRNVPTKNIDYGKVENASGGTVRQRAKLVQGIDKDNAKKINTIIKNSGLKVKSQVQDDQVRVTGKNKDDLQQIISAVRGADLPIDVQFINFR.

The protein belongs to the YajQ family.

Functionally, nucleotide-binding protein. This is Nucleotide-binding protein BSU11020 (yitK) from Bacillus subtilis (strain 168).